A 542-amino-acid chain; its full sequence is MEKRTLLAVILSITVFYVFSLLFAPEKKPVQPESTGQAVSAPVSAGQPVAGGVQPSASAPSLPATAQQQDVTVRTGLYTAVFCSRGGALKSLTLKNYREKNLPDAQAVVLGSDADPSALTFSTRASGFNLPEGAPFVADATAVTMAGGEKKQLVFTHNSGQGFTVRKIYTFSGDSYGIKLDTQVFNNMAVPLVGTVQQVMTYPGLVKAKDSRFETAGSYLFSDNSLESDKLKDVSSASKLYDKNLQWSGFADKYFLTAILSEGGSIASVELRKNGAGFLESTVSSPRITVTPGQSVTVVHRLFVGPKDIDILKAQGNSLEQSLDLGWFTVIAKPLLYTLKYFYRYVGNYGVAIIIITIILKALFFPLTHKSYKSMKDMQKIQPMMAALKEKYKDDREGMNKAVMELYRDHKVNPLGGCLPMLVQIPVFFALYKALMFSIELRHAPFYFWITDLSGPDNLFGQMLGLPFVIGPLPLLMGATMFIQQKMTPSTMDPMQAKMMLALPVVFTFMFLNFPSGLVLYWLLNNILTIGQQMYINKLVND.

A helical membrane pass occupies residues 5–25 (TLLAVILSITVFYVFSLLFAP). The interval 33–64 (ESTGQAVSAPVSAGQPVAGGVQPSASAPSLPA) is disordered. Low complexity predominate over residues 54–64 (QPSASAPSLPA). 5 helical membrane-spanning segments follow: residues 323-343 (LDLGWFTVIAKPLLYTLKYFY), 345-365 (YVGNYGVAIIIITIILKALFF), 419-439 (LPMLVQIPVFFALYKALMFSI), 463-483 (MLGLPFVIGPLPLLMGATMFI), and 500-520 (MLALPVVFTFMFLNFPSGLVL).

It belongs to the OXA1/ALB3/YidC family. Type 1 subfamily. In terms of assembly, interacts with the Sec translocase complex via SecD. Specifically interacts with transmembrane segments of nascent integral membrane proteins during membrane integration.

It localises to the cell inner membrane. Its function is as follows. Required for the insertion and/or proper folding and/or complex formation of integral membrane proteins into the membrane. Involved in integration of membrane proteins that insert both dependently and independently of the Sec translocase complex, as well as at least some lipoproteins. Aids folding of multispanning membrane proteins. This chain is Membrane protein insertase YidC, found in Pelobacter propionicus (strain DSM 2379 / NBRC 103807 / OttBd1).